The sequence spans 213 residues: Imidazole glycerol phosphate synthase subunit HisH (213 aa).

Residues 3–213 (MIGVIDYGMG…VGIVTGRENG (211 aa)) enclose the Glutamine amidotransferase type-1 domain. The Nucleophile role is filled by Cys81. Active-site residues include His188 and Glu190.

Heterodimer of HisH and HisF.

The protein localises to the cytoplasm. It catalyses the reaction 5-[(5-phospho-1-deoxy-D-ribulos-1-ylimino)methylamino]-1-(5-phospho-beta-D-ribosyl)imidazole-4-carboxamide + L-glutamine = D-erythro-1-(imidazol-4-yl)glycerol 3-phosphate + 5-amino-1-(5-phospho-beta-D-ribosyl)imidazole-4-carboxamide + L-glutamate + H(+). The enzyme catalyses L-glutamine + H2O = L-glutamate + NH4(+). It functions in the pathway amino-acid biosynthesis; L-histidine biosynthesis; L-histidine from 5-phospho-alpha-D-ribose 1-diphosphate: step 5/9. Functionally, IGPS catalyzes the conversion of PRFAR and glutamine to IGP, AICAR and glutamate. The HisH subunit catalyzes the hydrolysis of glutamine to glutamate and ammonia as part of the synthesis of IGP and AICAR. The resulting ammonia molecule is channeled to the active site of HisF. The polypeptide is Imidazole glycerol phosphate synthase subunit HisH (Geobacillus thermodenitrificans (strain NG80-2)).